A 65-amino-acid chain; its full sequence is Large ribosomal subunit protein bL31 (65 aa).

The Zn(2+) site is built by Cys-16, Cys-18, Cys-36, and Cys-39.

It belongs to the bacterial ribosomal protein bL31 family. Type A subfamily. In terms of assembly, part of the 50S ribosomal subunit. The cofactor is Zn(2+).

Functionally, binds the 23S rRNA. This chain is Large ribosomal subunit protein bL31, found in Alkaliphilus metalliredigens (strain QYMF).